Reading from the N-terminus, the 157-residue chain is Mini-ribonuclease 3 (157 aa).

The active site involves aspartate 18. Residues 126–157 (EEDEGKGKGETAKEEESITDALSPAEQSEIDC) are disordered. The segment covering 130–141 (GKGKGETAKEEE) has biased composition (basic and acidic residues).

It belongs to the MrnC RNase family. As to quaternary structure, homodimer. Mg(2+) serves as cofactor.

The protein localises to the cytoplasm. Involved in correct processing of both the 5' and 3' ends of 23S rRNA precursor. Processes 30S rRNA precursor transcript even in absence of ribonuclease 3 (Rnc); Rnc processes 30S rRNA into smaller rRNA precursors. The polypeptide is Mini-ribonuclease 3 (Desulfitobacterium hafniense (strain Y51)).